Reading from the N-terminus, the 269-residue chain is Shikimate dehydrogenase (NADP(+)) (269 aa).

Shikimate-binding positions include serine 14–serine 16 and threonine 61. The active-site Proton acceptor is lysine 65. Glutamate 77 provides a ligand contact to NADP(+). Residues asparagine 86 and aspartate 102 each coordinate shikimate. Residues glycine 126–alanine 130, asparagine 149–lysine 154, and methionine 213 contribute to the NADP(+) site. Tyrosine 215 is a shikimate binding site. Glycine 238 contacts NADP(+).

Belongs to the shikimate dehydrogenase family. As to quaternary structure, homodimer.

The enzyme catalyses shikimate + NADP(+) = 3-dehydroshikimate + NADPH + H(+). It functions in the pathway metabolic intermediate biosynthesis; chorismate biosynthesis; chorismate from D-erythrose 4-phosphate and phosphoenolpyruvate: step 4/7. Functionally, involved in the biosynthesis of the chorismate, which leads to the biosynthesis of aromatic amino acids. Catalyzes the reversible NADPH linked reduction of 3-dehydroshikimate (DHSA) to yield shikimate (SA). This Pasteurella multocida (strain Pm70) protein is Shikimate dehydrogenase (NADP(+)).